We begin with the raw amino-acid sequence, 339 residues long: Bifunctional NMN adenylyltransferase/Nudix hydrolase (339 aa).

Positions 1 to 183 (MQTKYQYGIY…RYIALCDEYQ (183 aa)) are NMN adenylyltransferase. The region spanning 199 to 335 (PTFITTDAVV…EDHFQIIQHF (137 aa)) is the Nudix hydrolase domain. A Nudix box motif is present at residues 233 to 254 (GFIKQNETLVEGMLRELKEETR).

This sequence in the N-terminal section; belongs to the archaeal NMN adenylyltransferase family. Mg(2+) is required as a cofactor. The cofactor is Mn(2+).

Its subcellular location is the cytoplasm. It catalyses the reaction beta-nicotinamide D-ribonucleotide + ATP + H(+) = diphosphate + NAD(+). Its pathway is cofactor biosynthesis; NAD(+) biosynthesis; NAD(+) from nicotinamide D-ribonucleotide: step 1/1. The Nudix hydrolase domain is active on ADP-ribose, (2')-phospho-ADP-ribose, IDP-ribose and NADPH. The chain is Bifunctional NMN adenylyltransferase/Nudix hydrolase from Synechocystis sp. (strain ATCC 27184 / PCC 6803 / Kazusa).